The sequence spans 601 residues: MENQAHTTAGASPCEAELQELMEQIDIMVSNKKLDWERKMRALETRLDLRDQELANAQTCLDQKGQEVGLLRQKLDSLEKCNLVMTQNYEGQLQTLKAQFSKLTSNFEKLRLHQMKQNQIHRKESSSKEELPFELSSLNQKLEEFRAKSREWDKQEVLYQTHLVSLDAQQKLLSEKCSQFQKQAQNYQTQLNGKKQCAEDSSSEIPRLVCESDPGCEATQRDEFIIEKLKSAVSEIALSRNKLQDENQKLLQELKMYQRQCQAMEAGLSEVKSELQSRDDLLRIIEMERLHLHRELLRMGEVQTAQDNRKRVESSYSPSPKEAERKRKELFPMVSDQPNHEKELSKMRSQLYQEEGLCSEQERLRSEISELTQELHQKEVTIATVMKKAALLERQLKIELEIKERMLAKQQVSDRRYKAVRTENTHLKGMMGDLDPARYLAVDLSNKKHSQCTSINKLEYENERLRSDLAKLHGNGKAAWPNQSSYGEAGAYVFQSQLKTETSGDRISQDCELNRSPTPLSPLPFQTKEMASPLVGDNEVLALSPPDISFRASLAAQHFLMEEERRAKELEKLLNTHIDELQRHTEFTLNKYTKLKQSRHI.

Coiled-coil stretches lie at residues 14–59 (CEAE…NAQT), 86–196 (TQNY…GKKQ), and 226–277 (IEKL…ELQS). The interval 305–329 (AQDNRKRVESSYSPSPKEAERKRKE) is disordered. The stretch at 354 to 397 (EEGLCSEQERLRSEISELTQELHQKEVTIATVMKKAALLERQLK) forms a coiled coil. Serine 544 is modified (phosphoserine). Residues 555 to 586 (AAQHFLMEEERRAKELEKLLNTHIDELQRHTE) are a coiled coil.

The protein belongs to the CEP63 family. In terms of assembly, interacts with CEP152; the interaction is mutually exclusive with CEP63. In terms of tissue distribution, highly enriched in multicilia-abundant tissues (trachea and oviduct).

Its subcellular location is the cytoplasm. In terms of biological role, key structural component of the deuterosome, a structure that promotes de novo centriole amplification in multiciliated cells. Deuterosome-mediated centriole amplification occurs in terminally differentiated multiciliated cells and can generate more than 100 centrioles. Probably sufficient for the specification and formation of the deuterosome inner core. Interacts with CEP152 and recruits PLK4 to activate centriole biogenesis. This is Deuterosome assembly protein 1 from Mus musculus (Mouse).